The sequence spans 283 residues: Short-chain dehydrogenase cctT (283 aa).

The first 20 residues, 1 to 20, serve as a signal peptide directing secretion; that stretch reads MLKTVLITGCSHGGLGAAMA. Residues isoleucine 7, threonine 33, lysine 39, glutamate 55, and asparagine 83 each contribute to the NADP(+) site. Asparagine 131 carries N-linked (GlcNAc...) asparagine glycosylation. Catalysis depends on serine 133, which acts as the Proton donor. Tyrosine 147, arginine 151, valine 180, and threonine 182 together coordinate NADP(+). Tyrosine 147 serves as the catalytic Proton acceptor.

This sequence belongs to the short-chain dehydrogenases/reductases (SDR) family.

Short-chain dehydrogenase; part of the gene cluster that mediates the biosynthesis of the mycotoxin cyclochlorotine, a hepatotoxic and carcinogenic cyclic chlorinated pentapeptide. The function of cctT within the pathway, if any, remains undetermined. The NRPS cctN initially catalyzes the condensation of L-serine (Ser), Pro, L-2-aminobutyrate (2Abu), Ser, and beta-Phe in this order to produce isocyclotine. After the dichlorination of Pro2 catalyzed by cctP2 to produce isocyclochlorotine, the cctO-mediated transacylation of isocyclochlorotine can furnish cyclochlorotine. The subsequent hydroxylation of cyclochlorotine by cctR yields hydroxycyclochlorotine as the final product. CctP1 probably acts as a phenylalanine aminomutase and provides the uncommon building block beta-Phe. Furthermore, 2Abu can be synthesized from threonine by one of the threonine dehydratases and transaminases localized outside of the cluster. The functions of the remaining proteins encoded by the cluster, cctM and cctT, have not been identified yet. This Talaromyces islandicus (Penicillium islandicum) protein is Short-chain dehydrogenase cctT.